The chain runs to 360 residues: Pyrimidine monooxygenase RutA (360 aa).

FMN is bound by residues 49–50, Asn-115, Glu-124, 140–141, and Ser-190; these read IK and RY.

Belongs to the NtaA/SnaA/DszA monooxygenase family. RutA subfamily.

It catalyses the reaction uracil + FMNH2 + NADH + O2 = (Z)-3-ureidoacrylate + FMN + NAD(+) + H2O + H(+). The catalysed reaction is thymine + FMNH2 + NADH + O2 = (Z)-2-methylureidoacrylate + FMN + NAD(+) + H2O + H(+). Its function is as follows. Catalyzes the pyrimidine ring opening between N-3 and C-4 by an unusual flavin hydroperoxide-catalyzed mechanism, adding oxygen atoms in the process to yield ureidoacrylate peracid, that immediately reacts with FMN forming ureidoacrylate and FMN-N(5)-oxide. The FMN-N(5)-oxide reacts spontaneously with NADH to produce FMN. Requires the flavin reductase RutF to regenerate FMN in vivo. The sequence is that of Pyrimidine monooxygenase RutA from Stutzerimonas stutzeri (strain A1501) (Pseudomonas stutzeri).